The chain runs to 148 residues: Large ribosomal subunit protein bL9 (148 aa).

This sequence belongs to the bacterial ribosomal protein bL9 family.

In terms of biological role, binds to the 23S rRNA. The polypeptide is Large ribosomal subunit protein bL9 (Lysinibacillus sphaericus (strain C3-41)).